A 76-amino-acid polypeptide reads, in one-letter code: Small ribosomal subunit protein uS17 (76 aa).

Belongs to the universal ribosomal protein uS17 family. In terms of assembly, part of the 30S ribosomal subunit.

One of the primary rRNA binding proteins, it binds specifically to the 5'-end of 16S ribosomal RNA. This chain is Small ribosomal subunit protein uS17, found in Ruegeria pomeroyi (strain ATCC 700808 / DSM 15171 / DSS-3) (Silicibacter pomeroyi).